Reading from the N-terminus, the 250-residue chain is DNA repair protein RecO (250 aa).

Belongs to the RecO family.

Functionally, involved in DNA repair and RecF pathway recombination. In Beijerinckia indica subsp. indica (strain ATCC 9039 / DSM 1715 / NCIMB 8712), this protein is DNA repair protein RecO.